The primary structure comprises 506 residues: Aspartic proteinase A1 (506 aa).

Positions 1–24 (MKIYSRTVAVSLIVSFLLCFSAFA) are cleaved as a signal peptide. A propeptide spans 25-64 (ERNDGTFRVGLKKLKLDSKNRLAARVESKQEKPLRAYRLG) (activation peptide). The 422-residue stretch at 82 to 503 (YYGEIAIGTP…DFGNEQVGFA (422 aa)) folds into the Peptidase A1 domain. The active site involves Asp100. Intrachain disulfides connect Cys113–Cys119 and Cys278–Cys282. Asp287 is a catalytic residue. The Saposin B-type domain occupies 312 to 417 (VVSQQCKTVV…NELCERLPSP (106 aa)). 4 cysteine pairs are disulfide-bonded: Cys317-Cys411, Cys342-Cys383, Cys348-Cys380, and Cys425-Cys462. Asn397 carries an N-linked (GlcNAc...) asparagine glycan.

This sequence belongs to the peptidase A1 family. In terms of tissue distribution, expressed in roots, leaves, stems, petals, carpels, seed pods and dry seeds.

It is found in the vacuole. In terms of biological role, involved in the breakdown of propeptides of storage proteins in protein-storage vacuoles. Possesses aspartic protease activity in vitro. In Arabidopsis thaliana (Mouse-ear cress), this protein is Aspartic proteinase A1 (APA1).